A 469-amino-acid chain; its full sequence is Neuraminidase (469 aa).

Topologically, residues 1 to 6 are intravirion; sequence MNPNQK. A helical transmembrane segment spans residues 7 to 29; the sequence is IITIGVVNTTLSTIALLIGVGNL. Residues 11-33 form an involved in apical transport and lipid raft association region; sequence GVVNTTLSTIALLIGVGNLIFNT. Residues 30–469 lie on the Virion surface side of the membrane; sequence IFNTVIHEKI…DGSNIGFMPK (440 aa). The tract at residues 36–88 is hypervariable stalk region; sequence HEKIGDHQTVVYPTITAPVVPNCSDTIITYNNTVINNITTTIITEAERHFKPS. N-linked (GlcNAc...) asparagine; by host glycans are attached at residues asparagine 57, asparagine 66, and asparagine 72. The tract at residues 91–469 is head of neuraminidase; it reads LCPFRGFFPF…DGSNIGFMPK (379 aa). 8 disulfides stabilise this stretch: cysteine 92–cysteine 416, cysteine 124–cysteine 129, cysteine 184–cysteine 231, cysteine 233–cysteine 238, cysteine 280–cysteine 292, cysteine 282–cysteine 290, cysteine 318–cysteine 336, and cysteine 420–cysteine 447. Arginine 118 is a binding site for substrate. Residue asparagine 146 is glycosylated (N-linked (GlcNAc...) asparagine; by host). Aspartate 151 functions as the Proton donor/acceptor in the catalytic mechanism. Substrate is bound at residue arginine 152. Residue 278 to 279 participates in substrate binding; that stretch reads EE. Arginine 293 contributes to the substrate binding site. Residues aspartate 294 and glycine 298 each contribute to the Ca(2+) site. Asparagine 308 carries N-linked (GlcNAc...) asparagine; by host glycosylation. Aspartate 324 provides a ligand contact to Ca(2+). Residue arginine 370 coordinates substrate. Tyrosine 405 functions as the Nucleophile in the catalytic mechanism.

Belongs to the glycosyl hydrolase 34 family. In terms of assembly, homotetramer. The cofactor is Ca(2+). In terms of processing, N-glycosylated.

The protein localises to the virion membrane. The protein resides in the host apical cell membrane. The catalysed reaction is Hydrolysis of alpha-(2-&gt;3)-, alpha-(2-&gt;6)-, alpha-(2-&gt;8)- glycosidic linkages of terminal sialic acid residues in oligosaccharides, glycoproteins, glycolipids, colominic acid and synthetic substrates.. Inhibited by the neuraminidase inhibitors zanamivir (Relenza) and oseltamivir (Tamiflu). These drugs interfere with the release of progeny virus from infected cells and are effective against all influenza strains. Resistance to neuraminidase inhibitors is quite rare. Its function is as follows. Catalyzes the removal of terminal sialic acid residues from viral and cellular glycoconjugates. Cleaves off the terminal sialic acids on the glycosylated HA during virus budding to facilitate virus release. Additionally helps virus spread through the circulation by further removing sialic acids from the cell surface. These cleavages prevent self-aggregation and ensure the efficient spread of the progeny virus from cell to cell. Otherwise, infection would be limited to one round of replication. Described as a receptor-destroying enzyme because it cleaves a terminal sialic acid from the cellular receptors. May facilitate viral invasion of the upper airways by cleaving the sialic acid moieties on the mucin of the airway epithelial cells. Likely to plays a role in the budding process through its association with lipid rafts during intracellular transport. May additionally display a raft-association independent effect on budding. Plays a role in the determination of host range restriction on replication and virulence. Sialidase activity in late endosome/lysosome traffic seems to enhance virus replication. The chain is Neuraminidase from Aves.